The chain runs to 92 residues: uncharacterized protein (92 aa).

This is an uncharacterized protein from Pasteurella multocida (strain Pm70).